Reading from the N-terminus, the 648-residue chain is MSPRRSVCWFVLGQLLCSCAVALQGGMLFPKETPSRELKVLDGLWSFRADYSNNRLQGFEKQWYRQPLRESGPTLDMPVPSSFNDITQEAELRNFIGWVWYEREAVLPQRWTQDTDRRVVLRINSAHYYAVVWVNGIHVVEHEGGHLPFEADITKLVQSGPLTTFRVTIAINNTLTPYTLPPGTIVYKTDPSMYPKGYFVQDISFDFFNYAGLHRSVVLYTTPTTYIDDITVTTDVDRDVGLVNYWISVQGSDHFQLEVRLLDEDGKIVARGTGNEGQLKVPRAHLWWPYLMHEHPAYLYSLEVTMTTPESVSDFYTLPVGIRTVAVTKSKFLINGKPFYFQGVNKHEDSDIRGRGFDWPLLIKDFNLLRWLGANSFRTSHYPYSEEVLQLCDRYGIVVIDECPGVGIVLPQSFGNVSLRHHLEVMDELVRRDKNHPAVVMWSVANEPVSSLKPAGYYFKTLIAHTKALDPTRPVTFVSNTRYDADMGAPYVDVICVNSYLSWYHDYGHLEVIQLQLTSQFENWYKMYQKPIIQSEYGADAVSGLHEDPPRMFSEEYQTALLENYHLILDEKRKEYVIGELIWNFADFMTNQSPLRVTGNKKGIFTRQRNPKMAAFILRERYWRIANETRGYGSVPRTQCMGSRPFTF.

The first 22 residues, 1–22 (MSPRRSVCWFVLGQLLCSCAVA), serve as a signal peptide directing secretion. Asparagine 172 and asparagine 416 each carry an N-linked (GlcNAc...) asparagine glycan. The Proton donor role is filled by glutamate 447. An N-linked (GlcNAc...) asparagine glycan is attached at asparagine 627.

Belongs to the glycosyl hydrolase 2 family. In terms of assembly, homotetramer. In terms of processing, undergoes a post-transcriptional proteolytic cleavage near its C-terminal end, which reduces its size by approximately 3 kDa. The site of this cleavage has as yet not been determined.

The protein localises to the lysosome. The enzyme catalyses a beta-D-glucuronoside + H2O = D-glucuronate + an alcohol. Its activity is regulated as follows. Inhibited by L-aspartic acid. Functionally, plays an important role in the degradation of dermatan and keratan sulfates. The sequence is that of Beta-glucuronidase (Gusb) from Rattus norvegicus (Rat).